The sequence spans 547 residues: Chaperonin GroEL (547 aa).

ATP is bound by residues 30–33 (TLGP), lysine 51, 87–91 (DGTTT), glycine 415, and aspartate 495.

Belongs to the chaperonin (HSP60) family. In terms of assembly, forms a cylinder of 14 subunits composed of two heptameric rings stacked back-to-back. Interacts with the co-chaperonin GroES.

Its subcellular location is the cytoplasm. The enzyme catalyses ATP + H2O + a folded polypeptide = ADP + phosphate + an unfolded polypeptide.. In terms of biological role, together with its co-chaperonin GroES, plays an essential role in assisting protein folding. The GroEL-GroES system forms a nano-cage that allows encapsulation of the non-native substrate proteins and provides a physical environment optimized to promote and accelerate protein folding. The polypeptide is Chaperonin GroEL (Shewanella pealeana (strain ATCC 700345 / ANG-SQ1)).